We begin with the raw amino-acid sequence, 185 residues long: Large ribosomal subunit protein uL22 (185 aa).

It belongs to the universal ribosomal protein uL22 family. In terms of assembly, part of the 50S ribosomal subunit.

In terms of biological role, this protein binds specifically to 23S rRNA. It makes multiple contacts with different domains of the 23S rRNA in the assembled 50S subunit and ribosome. Its function is as follows. The globular domain of the protein is located near the polypeptide exit tunnel on the outside of the subunit, while an extended beta-hairpin is found that lines the wall of the exit tunnel in the center of the 70S ribosome. This is Large ribosomal subunit protein uL22 from Pyrobaculum neutrophilum (strain DSM 2338 / JCM 9278 / NBRC 100436 / V24Sta) (Thermoproteus neutrophilus).